A 1395-amino-acid chain; its full sequence is G2/mitotic-specific cyclin-B3 (1395 aa).

Residues 1-59 are disordered; it reads MLLPLPPQSSKPVPKKSQSSKIVPSHHDPSEKTGENCQTKISPSSLQESPSSLQGALKK. The span at 10-23 shows a compositional bias: low complexity; sequence SKPVPKKSQSSKIV. Basic and acidic residues predominate over residues 25 to 34; the sequence is SHHDPSEKTG. Positions 42-54 are enriched in low complexity; sequence SPSSLQESPSSLQ. A D-box motif is present at residues 60-68; sequence RSAFEDLTN. Disordered stretches follow at residues 418 to 464 and 1074 to 1122; these read LSIK…PTEE and ATMT…DSSD. The span at 419–431 shows a compositional bias: basic and acidic residues; the sequence is SIKEKPSTEKESF. The span at 1082-1093 shows a compositional bias: low complexity; sequence SRTTTESSACES.

The protein belongs to the cyclin family. Cyclin AB subfamily. Interacts with CDK2 kinase. In terms of processing, ubiquitinated. Ubiquitination leads to its degradation during anaphase entry, after degradation of CCNB1. In terms of tissue distribution, testis specific. In testis, it is expressed in developing germ cells, but not in Leydig cells. Weakly or not expressed in other tissues.

Its subcellular location is the nucleus. Cyclins are positive regulatory subunits of the cyclin-dependent kinases (CDKs), and thereby play an essential role in the control of the cell cycle, notably via their destruction during cell division. Its tissue specificity suggest that it may be required during early meiotic prophase I. The sequence is that of G2/mitotic-specific cyclin-B3 (CCNB3) from Homo sapiens (Human).